The chain runs to 154 residues: Terephthalate 1,2-dioxygenase, terminal oxygenase component subunit beta 1 (154 aa).

This sequence belongs to the bacterial ring-hydroxylating dioxygenase beta subunit family. Heterotetramer composed of 2 alpha (TphA2I and TphA2II) and 2 beta (TphA3I and TphA3II) subunits. Part of a multicomponent enzyme system composed of a reductase (TphA1I or TphA1II) and a two-subunit oxygenase component (TphA2I or TphA2II and TphA3I or TphA3II). Fe cation is required as a cofactor.

It carries out the reaction terephthalate + NADH + O2 + H(+) = (3S,4R)-3,4-dihydroxycyclohexa-1,5-diene-1,4-dicarboxylate + NAD(+). Inhibited by EDTA. Component of the terephthalate 1,2-dioxygenase multicomponent enzyme system which catalyzes the dioxygenation of terephthalate (TER/TPA) to 1,2-dihydroxy-3,5-cyclohexadiene-1,4-dicarboxylic acid (DCD). It can also use 2,5-dicarboxypyridine (PDC) and 1,4-napthalenedicarboxylic acid (NDC) as substrates, and preferentially uses NADPH which is the physiological electron donor. In Comamonas sp, this protein is Terephthalate 1,2-dioxygenase, terminal oxygenase component subunit beta 1 (tphA3I).